Here is a 220-residue protein sequence, read N- to C-terminus: Large ribosomal subunit protein bL9 (220 aa).

The segment covering 167–184 (AAAEVEQAEDVAAAEQQD) has biased composition (low complexity). Positions 167–220 (AAAEVEQAEDVAAAEQQDSSPVDDHADDADGATGGEGRDEGAGDASDGEEMPST) are disordered.

The protein belongs to the bacterial ribosomal protein bL9 family.

Binds to the 23S rRNA. The sequence is that of Large ribosomal subunit protein bL9 from Anaplasma marginale (strain St. Maries).